The sequence spans 320 residues: Melanocyte-stimulating hormone receptor (320 aa).

Over 1–40 (MPVLGPERRLLASLSSAPPAAPRLGLAANQTNQTGPQCLE) the chain is Extracellular. Residue Asn32 is glycosylated (N-linked (GlcNAc...) asparagine). A helical transmembrane segment spans residues 41 to 66 (VSIPDGLFLSLGLVSLVENVLVVAAI). Residues 67-75 (AKNRNLHSP) lie on the Cytoplasmic side of the membrane. A helical transmembrane segment spans residues 76 to 96 (MYYFVCCLAVSDLLVSVSNVL). Residues 97-121 (ETAVLLLLEAGALAAQAAVVQQLDN) lie on the Extracellular side of the membrane. A helical membrane pass occupies residues 122–143 (VMDVLICGSMVSSLCFLGAIAV). Residues 144–166 (DRYVSIFYALRYHSIVTLPRAGR) lie on the Cytoplasmic side of the membrane. The helical transmembrane segment at 167–186 (AIAAIWAGSVLSSTLFIAYY) threads the bilayer. Residues 187-194 (HHTAVLLG) are Extracellular-facing. A helical membrane pass occupies residues 195 to 214 (LVSFFVAMLALMAVLYVHML). The Cytoplasmic portion of the chain corresponds to 215 to 243 (ARACQHGRHIARLHKTQHPTRQGCGLKGA). The helical transmembrane segment at 244–269 (ATLTILLGVFLLCWAPFFLHLSLVVL) threads the bilayer. Topologically, residues 270–282 (CPQHPTCGCVFKN) are extracellular. The helical transmembrane segment at 283 to 303 (VNLFLALVICNSIVDPLIYAF) threads the bilayer. At 304 to 320 (RSQELRKTLQEVLQCSW) the chain is on the cytoplasmic side.

The protein belongs to the G-protein coupled receptor 1 family. Interacts with MGRN1, but does not undergo MGRN1-mediated ubiquitination; this interaction competes with GNAS-binding and thus inhibits agonist-induced cAMP production. Interacts with OPN3; the interaction results in a decrease in MC1R-mediated cAMP signaling and ultimately a decrease in melanin production in melanocytes.

It is found in the cell membrane. Receptor for MSH (alpha, beta and gamma) and ACTH. The activity of this receptor is mediated by G proteins which activate adenylate cyclase. Mediates melanogenesis, the production of eumelanin (black/brown) and phaeomelanin (red/yellow), via regulation of cAMP signaling in melanocytes. The sequence is that of Melanocyte-stimulating hormone receptor (MC1R) from Sus scrofa (Pig).